A 96-amino-acid chain; its full sequence is UPF0235 protein ECA3630 (96 aa).

It belongs to the UPF0235 family.

This Pectobacterium atrosepticum (strain SCRI 1043 / ATCC BAA-672) (Erwinia carotovora subsp. atroseptica) protein is UPF0235 protein ECA3630.